A 307-amino-acid polypeptide reads, in one-letter code: Putative flagellar export/assembly protein LafU (307 aa).

Residues 32–54 (AWKVAFADFTLAMMALFMTLWIV) form a helical membrane-spanning segment. The disordered stretch occupies residues 87–108 (SPSHPPKPATVAAPEETEKKAR). The OmpA-like domain maps to 154-272 (LRVLIKDDQN…RIEIMVLTKS (119 aa)).

The protein belongs to the MotB family.

It localises to the cell inner membrane. In terms of biological role, part of the flagellar gene cluster Flag-2. However, the Flag-2 flagellar system could be inactive in strain 042 due to a frameshift in lfgC. The polypeptide is Putative flagellar export/assembly protein LafU (Escherichia coli O44:H18 (strain 042 / EAEC)).